Consider the following 132-residue polypeptide: Small ribosomal subunit protein uS8 (132 aa).

This sequence belongs to the universal ribosomal protein uS8 family. Part of the 30S ribosomal subunit. Contacts proteins S5 and S12.

Its function is as follows. One of the primary rRNA binding proteins, it binds directly to 16S rRNA central domain where it helps coordinate assembly of the platform of the 30S subunit. The protein is Small ribosomal subunit protein uS8 of Paracoccus denitrificans (strain Pd 1222).